The sequence spans 320 residues: Lipoyl synthase (320 aa).

Positions 1-11 (MGGMNDLSSTP) are enriched in polar residues. The segment at 1–24 (MGGMNDLSSTPAPEGDRPARQRKP) is disordered. The span at 14-24 (EGDRPARQRKP) shows a compositional bias: basic and acidic residues. [4Fe-4S] cluster contacts are provided by C53, C58, C64, C79, C83, C86, and S293. Positions 65 to 282 (WTKKHATVMI…GAIARAKGFL (218 aa)) constitute a Radical SAM core domain.

The protein belongs to the radical SAM superfamily. Lipoyl synthase family. The cofactor is [4Fe-4S] cluster.

The protein localises to the cytoplasm. The catalysed reaction is [[Fe-S] cluster scaffold protein carrying a second [4Fe-4S](2+) cluster] + N(6)-octanoyl-L-lysyl-[protein] + 2 oxidized [2Fe-2S]-[ferredoxin] + 2 S-adenosyl-L-methionine + 4 H(+) = [[Fe-S] cluster scaffold protein] + N(6)-[(R)-dihydrolipoyl]-L-lysyl-[protein] + 4 Fe(3+) + 2 hydrogen sulfide + 2 5'-deoxyadenosine + 2 L-methionine + 2 reduced [2Fe-2S]-[ferredoxin]. It participates in protein modification; protein lipoylation via endogenous pathway; protein N(6)-(lipoyl)lysine from octanoyl-[acyl-carrier-protein]: step 2/2. In terms of biological role, catalyzes the radical-mediated insertion of two sulfur atoms into the C-6 and C-8 positions of the octanoyl moiety bound to the lipoyl domains of lipoate-dependent enzymes, thereby converting the octanoylated domains into lipoylated derivatives. The chain is Lipoyl synthase from Erythrobacter litoralis (strain HTCC2594).